The following is a 718-amino-acid chain: MSKVVYEGWMVRYGRRKIGRSYIHMRYFVLEPRLLAYYKKKPQDYQVPIKTMLIDGNCRVEDRGLKTHHGHMVYVLSVYNKKEKSHRITMAAFNIQEALMWKEKIESVIDQHQESQVPNGQQYVSFEYKSGMDTGRTASSSDHESQFSAAEDEEDSRRSLMRRTTIGNGPPESVLDWTKEFDAELANQNSDNQAFSRKHWRLLQCQNGLRIFEELLEVDYLPRSCSRAMKAVGVVEATCEEIFELLMSMDGTRYEWDCSFQFGSLVEEVDGHTAVLYHRLLLDWFPMIVWPRDLCYVRYWRRNDDGSYVVLFRSREHENCGPQPGCVRAHLESGGYNISPLKPRNGRPRTQVQHLIQIDLKGWGAGYLPAFQQHCLLQMLNSVAGLREWFSQTDERGVHTRIPVMVNMASSSLSLTKSGKSLHKSAFSLDQTNSVNRNSLLMDEDSDDDDEFQIAESEQEPETSKPETDVKRPEEEPAHNIDLSCFSGNLKRNENENARNCWRISDGNNFKVRGKNFGQEKRKIPAGKHLMDLVAVDWFKDSKRIDHVARRKGCAAQVAAEKGLFSMVVNVQVPGSTHYSMVFYFVMKELVPGSLLQRFVDGDDEFRNSRLKLIPLVPKGSWIVRQSVGSTPCLLGKAVDCNYIRGPTYLEIDVDIGSSTVANGVLGLVIGVITSLVVEMAFLVQANTAEEQPERLIGAVRVSHIELSSAIVPNLESE.

The 108-residue stretch at 3–110 (KVVYEGWMVR…WKEKIESVID (108 aa)) folds into the PH domain. The disordered stretch occupies residues 134-174 (TGRTASSSDHESQFSAAEDEEDSRRSLMRRTTIGNGPPESV). Residues 180–392 (EFDAELANQN…VAGLREWFSQ (213 aa)) enclose the START domain. Positions 437–483 (RNSLLMDEDSDDDDEFQIAESEQEPETSKPETDVKRPEEEPAHNIDL) are disordered. Residues 442–461 (MDEDSDDDDEFQIAESEQEP) are compositionally biased toward acidic residues. Basic and acidic residues predominate over residues 462-479 (ETSKPETDVKRPEEEPAH). A helical transmembrane segment spans residues 664 to 684 (GVLGLVIGVITSLVVEMAFLV).

Expressed ubiquitously in all tissues and organs, including leaves, roots, flowers, stems and siliques.

The protein localises to the endoplasmic reticulum membrane. It localises to the cell membrane. It is found in the endosome membrane. Functionally, negative regulator of the salicylic acid- (SA-) mediated resistance to pathogens, including the biotrophic powdery mildew pathogens Golovinomyces cichoracearum and Blumeria graminis, and the downy mildew pathogen Hyaloperonospora parasitica, probably by limiting the initiation of cell death and the establishment of the hypersensitive response (HR). Prevents ethylene-induced senescence. Binds to phosphatidylinositol-4-phosphate (PtdIns(4)P) in vitro. The sequence is that of Protein ENHANCED DISEASE RESISTANCE 2 (EDR2) from Arabidopsis thaliana (Mouse-ear cress).